The chain runs to 63 residues: Chromatin protein Cren7 (63 aa).

This sequence belongs to the Cren7 family. Monomer. In terms of processing, methylated at multiple sites, to varying extents.

The protein resides in the chromosome. The protein localises to the cytoplasm. In terms of biological role, a chromatin protein, binds double-stranded DNA without sequence specificity. Constrains negative DNA supercoils. This is Chromatin protein Cren7 from Pyrobaculum calidifontis (strain DSM 21063 / JCM 11548 / VA1).